Reading from the N-terminus, the 158-residue chain is Putative zinc-binding protein ORF9 (158 aa).

The segment at 72-111 adopts an RING-type; degenerate zinc-finger fold; sequence CPVCGRAVVGPTVREACGHVTCNACETEACAVDRLCIGGG. Positions 126 to 158 are disordered; sequence GPRWRGPRPTRPEAHEAVQRSRGSSEDACTCAP. The segment covering 135-150 has biased composition (basic and acidic residues); it reads TRPEAHEAVQRSRGSS.

This chain is Putative zinc-binding protein ORF9 (ORF9), found in Ictalurid herpesvirus 1 (strain Auburn) (IcHV-1).